Consider the following 336-residue polypeptide: Ribose-phosphate pyrophosphokinase (336 aa).

ATP contacts are provided by residues 43–45 (DQE) and 102–103 (RQ). Mg(2+)-binding residues include His136 and Asp178. Residue Lys201 is part of the active site. D-ribose 5-phosphate is bound by residues Arg203, Asp227, and 231–235 (DTAGT).

It belongs to the ribose-phosphate pyrophosphokinase family. Class I subfamily. As to quaternary structure, homohexamer. Mg(2+) is required as a cofactor.

It is found in the cytoplasm. The catalysed reaction is D-ribose 5-phosphate + ATP = 5-phospho-alpha-D-ribose 1-diphosphate + AMP + H(+). It functions in the pathway metabolic intermediate biosynthesis; 5-phospho-alpha-D-ribose 1-diphosphate biosynthesis; 5-phospho-alpha-D-ribose 1-diphosphate from D-ribose 5-phosphate (route I): step 1/1. Its function is as follows. Involved in the biosynthesis of the central metabolite phospho-alpha-D-ribosyl-1-pyrophosphate (PRPP) via the transfer of pyrophosphoryl group from ATP to 1-hydroxyl of ribose-5-phosphate (Rib-5-P). This chain is Ribose-phosphate pyrophosphokinase, found in Cereibacter sphaeroides (strain KD131 / KCTC 12085) (Rhodobacter sphaeroides).